The primary structure comprises 229 residues: Large ribosomal subunit protein uL1 (229 aa).

It belongs to the universal ribosomal protein uL1 family. As to quaternary structure, part of the 50S ribosomal subunit.

Functionally, binds directly to 23S rRNA. The L1 stalk is quite mobile in the ribosome, and is involved in E site tRNA release. Its function is as follows. Protein L1 is also a translational repressor protein, it controls the translation of the L11 operon by binding to its mRNA. The sequence is that of Large ribosomal subunit protein uL1 from Flavobacterium johnsoniae (strain ATCC 17061 / DSM 2064 / JCM 8514 / BCRC 14874 / CCUG 350202 / NBRC 14942 / NCIMB 11054 / UW101) (Cytophaga johnsonae).